The following is a 426-amino-acid chain: Histidinol dehydrogenase (426 aa).

Residues Tyr125, Gln187, and Asn210 each coordinate NAD(+). The substrate site is built by Ser233, Gln255, and His258. 2 residues coordinate Zn(2+): Gln255 and His258. Residues Glu323 and His324 each act as proton acceptor in the active site. Residues His324, Asp357, Glu411, and His416 each contribute to the substrate site. Zn(2+) is bound at residue Asp357. His416 contributes to the Zn(2+) binding site.

This sequence belongs to the histidinol dehydrogenase family. Zn(2+) is required as a cofactor.

It catalyses the reaction L-histidinol + 2 NAD(+) + H2O = L-histidine + 2 NADH + 3 H(+). The protein operates within amino-acid biosynthesis; L-histidine biosynthesis; L-histidine from 5-phospho-alpha-D-ribose 1-diphosphate: step 9/9. Functionally, catalyzes the sequential NAD-dependent oxidations of L-histidinol to L-histidinaldehyde and then to L-histidine. This chain is Histidinol dehydrogenase (hisD), found in Methanothermobacter thermautotrophicus (strain ATCC 29096 / DSM 1053 / JCM 10044 / NBRC 100330 / Delta H) (Methanobacterium thermoautotrophicum).